A 51-amino-acid polypeptide reads, in one-letter code: Small ribosomal subunit protein eS31 (51 aa).

Zn(2+) contacts are provided by C21, C24, C39, and C42. A C4-type zinc finger spans residues C21–C42.

This sequence belongs to the eukaryotic ribosomal protein eS31 family. In terms of assembly, part of the 30S ribosomal subunit. Zn(2+) is required as a cofactor.

This Picrophilus torridus (strain ATCC 700027 / DSM 9790 / JCM 10055 / NBRC 100828 / KAW 2/3) protein is Small ribosomal subunit protein eS31.